The primary structure comprises 257 residues: Type III pantothenate kinase (257 aa).

Residue 6 to 13 (DVGNTNTV) participates in ATP binding. Substrate is bound by residues Tyr-100 and 107-110 (GADR). Residue Asp-109 is the Proton acceptor of the active site. Asp-129 is a binding site for K(+). ATP is bound at residue Thr-132. Thr-185 provides a ligand contact to substrate.

The protein belongs to the type III pantothenate kinase family. Homodimer. NH4(+) serves as cofactor. It depends on K(+) as a cofactor.

Its subcellular location is the cytoplasm. The enzyme catalyses (R)-pantothenate + ATP = (R)-4'-phosphopantothenate + ADP + H(+). It participates in cofactor biosynthesis; coenzyme A biosynthesis; CoA from (R)-pantothenate: step 1/5. Catalyzes the phosphorylation of pantothenate (Pan), the first step in CoA biosynthesis. The sequence is that of Type III pantothenate kinase from Desulfatibacillum aliphaticivorans.